The sequence spans 1081 residues: MNRSENLFFSGSSLASQVHAAAINGDKGALHRLIIGNSALKDKEDQFGRTPLMYCVLADRLDCADALLKAGADVNKTDHSQRTALHLAAQKGNYRFMKLLLTRRANWMQKDLEEMTPLHLATRHKSPKCLALLLKFMAPGEVDTQDKNKQTALHWSAYYNNPEHVKLLIKHDSNIGIPDVEGKIPLHWAANHKDPSAVHTVRCILDAAPTESLLNWQDYEGRTPLHFAVADGNVTVVDVLTSYESCNITSYDNLFRTPLHWAALLGHAQIVHLLLERNKSGTIPSDSQGATPLHYAAQSNFAETVKVFLKHPSVKDDSDLEGRTSFMWAAGKGSDDVLRTMLSLKSDIDINMADKYGGTALHAAALSGHVSTVKLLLENNAQVDATDVMKHTPLFRACEMGHKDVIQTLIKGGARVDLVDQDGHSLLHWAALGGNADVCQILIENKINPNVQDYAGRTPLQCAAYGGYINCMAVLMENNADPNIQDKEGRTALHWSCNNGYLDAIKLLLDFAAFPNQMENNEERYTPLDYALLGERHEVIQFMLEHGALSIAAIQDIAAFKIQAVYKGYKVRKAFRDRKNLLMKHEQLRKDAAAKKREEENKRREAEQQKGRLSPDSCRPQALPCLPNTQTDSHKQSRAPSKQPPSSEAAQDPDKRACRGGPGRVSPSRAPQKEQHLSPDVQGTVPRKPNESPREQCKGRSACVHFSPSEGSDGKRHPGVSSVEKSRSETGGEQRCDKGKGFLKQPSCLRVAGPGDEGEDPGWAAASLPQQDGHRKPSRRQDTASKAKCTSQKRRVQELRGGRHSPAGSSRPGSAKGEVVHAGPNALQHRTPRNKTTQDKLAGGIYSDLPQNTEVLRSGVRKSGTSTLSEDAQVSKETDPAPGPLSGQSVNIDLLPVELRLQIIQKERSRKELFRKKNKAAAVIQRAWRSYQLRKHLSHLLHMKELGARDVDRWNRECLALLLQVWRKDLELTPPKTTAVTRTTKSLSKGSSGAKSTRHSVLKQIYGCSQEGKVPHSTRSSRTHSVLHLNSVSNLQCIHLLENSGRSKNFSYNLQSATPPKTKTKLRPSLEEECVRGSWNS.

ANK repeat units lie at residues 13–42 (SLASQVHAAAINGDKGALHRLIIGNSALKD), 47–76 (FGRTPLMYCVLADRLDCADALLKAGADVNK), 80–110 (SQRTALHLAAQKGNYRFMKLLLTRRANWMQK), 113–144 (EEMTPLHLATRHKSPKCLALLLKFMAPGEVDT), 148–177 (NKQTALHWSAYYNNPEHVKLLIKHDSNIGI), 181–213 (EGKIPLHWAANHKDPSAVHTVRCILDAAPTESL), 220–250 (EGRTPLHFAVADGNVTVVDVLTSYESCNITS), 254–283 (LFRTPLHWAALLGHAQIVHLLLERNKSGTI), 288–317 (QGATPLHYAAQSNFAETVKVFLKHPSVKDD), 321–350 (EGRTSFMWAAGKGSDDVLRTMLSLKSDIDI), 356–385 (YGGTALHAAALSGHVSTVKLLLENNAQVDA), 389–418 (MKHTPLFRACEMGHKDVIQTLIKGGARVDL), 422–451 (DGHSLLHWAALGGNADVCQILIENKINPNV), 455–484 (AGRTPLQCAAYGGYINCMAVLMENNADPNI), 488–517 (EGRTALHWSCNNGYLDAIKLLLDFAAFPNQ), and 523–553 (ERYTPLDYALLGERHEVIQFMLEHGALSIAA). Asparagine 75 carries the 3-hydroxyasparagine modification. A D-box 1 motif is present at residues 490–498 (RTALHWSCN). In terms of domain architecture, IQ 1 spans 555–584 (QDIAAFKIQAVYKGYKVRKAFRDRKNLLMK). Over residues 589–610 (RKDAAAKKREEENKRREAEQQK) the composition is skewed to basic and acidic residues. Residues 589–889 (RKDAAAKKRE…PAPGPLSGQS (301 aa)) form a disordered region. Residues 638–649 (RAPSKQPPSSEA) are compositionally biased toward polar residues. 3 stretches are compositionally biased toward basic and acidic residues: residues 688–698 (KPNESPREQCK), 724–740 (EKSRSETGGEQRCDKGK), and 772–785 (DGHRKPSRRQDTAS). Residues 863–872 (SGTSTLSEDA) show a composition bias toward polar residues. Positions 910–918 (RKELFRKKN) match the D-box 2 motif. In terms of domain architecture, IQ 2 spans 917–946 (KNKAAAVIQRAWRSYQLRKHLSHLLHMKEL). Residues 1022–1050 (RTHSVLHLNSVSNLQCIHLLENSGRSKNF) form an ANK 17 repeat. The segment covering 1051 to 1061 (SYNLQSATPPK) has biased composition (polar residues). Residues 1051–1081 (SYNLQSATPPKTKTKLRPSLEEECVRGSWNS) form a disordered region.

Binds calmodulin via its IQ domains. Interacts with APC2. Interacts with alpha-, beta-, and gamma-catenin. Interacts with N-cadherin (CDH2). Interacts with NPHP1. Interacts with DVL1, PRICKLE (PRICKLE1 or PRICKLE2) and Strabismus (VANGL1 or VANGL2). Component of a complex containing at least ANKS6, INVS, NEK8 and NPHP3. ANKS6 may organize complex assembly by linking INVS and NPHP3 to NEK8 and INVS may target the complex to the proximal ciliary axoneme. Interacts with IQCB1; the interaction likely requires additional interactors. Interacts with microtubules. Post-translationally, may be ubiquitinated via its interaction with APC2. In terms of processing, hydroxylated at Asn-75, most probably by HIF1AN.

It is found in the cytoplasm. The protein resides in the cytoskeleton. The protein localises to the membrane. Its subcellular location is the spindle. It localises to the nucleus. Its function is as follows. Required for normal renal development and establishment of left-right axis. Probably acts as a molecular switch between different Wnt signaling pathways. Inhibits the canonical Wnt pathway by targeting cytoplasmic disheveled (DVL1) for degradation by the ubiquitin-proteasome. This suggests that it is required in renal development to oppose the repression of terminal differentiation of tubular epithelial cells by Wnt signaling. Involved in the organization of apical junctions in kidney cells together with NPHP1, NPHP4 and RPGRIP1L/NPHP8. Does not seem to be strictly required for ciliogenesis. The polypeptide is Inversin (INVS) (Canis lupus familiaris (Dog)).